A 356-amino-acid chain; its full sequence is S-adenosylmethionine:tRNA ribosyltransferase-isomerase (356 aa).

Belongs to the QueA family. In terms of assembly, monomer.

It localises to the cytoplasm. It catalyses the reaction 7-aminomethyl-7-carbaguanosine(34) in tRNA + S-adenosyl-L-methionine = epoxyqueuosine(34) in tRNA + adenine + L-methionine + 2 H(+). Its pathway is tRNA modification; tRNA-queuosine biosynthesis. Transfers and isomerizes the ribose moiety from AdoMet to the 7-aminomethyl group of 7-deazaguanine (preQ1-tRNA) to give epoxyqueuosine (oQ-tRNA). In Escherichia fergusonii (strain ATCC 35469 / DSM 13698 / CCUG 18766 / IAM 14443 / JCM 21226 / LMG 7866 / NBRC 102419 / NCTC 12128 / CDC 0568-73), this protein is S-adenosylmethionine:tRNA ribosyltransferase-isomerase.